The sequence spans 285 residues: MQTAHSVAQVREHVRGWHRKGQSVGFVPTMGNLHDGHISLVREARTRCDVVVVSIFVNPTQFGPNEDFDRYPRTLDADAAALVEAGADLLFAPSVEEMYPLGQNQTWVDVDQLGDHLCGASREGHFRGVTTVVSKLLNIVQPDVAIFGEKDFQQLAILRRMCEELLFPVKIVGAATSRETDGLARSSRNGFLSESERTLAPQLYAHLQQVKTEIIGGERNYRALESRTSQSLNSTGFSVDYITIANARTLAPAGPDDTDLIVAVAAKLGSTRLIDNISLAVVRDR.

30–37 (MGNLHDGH) lines the ATP pocket. The Proton donor role is filled by His-37. Gln-61 lines the (R)-pantoate pocket. Residue Gln-61 participates in beta-alanine binding. 148-151 (GEKD) lines the ATP pocket. A (R)-pantoate-binding site is contributed by Gln-154. 185 to 188 (RSSR) is an ATP binding site.

It belongs to the pantothenate synthetase family. As to quaternary structure, homodimer.

It is found in the cytoplasm. It carries out the reaction (R)-pantoate + beta-alanine + ATP = (R)-pantothenate + AMP + diphosphate + H(+). Its pathway is cofactor biosynthesis; (R)-pantothenate biosynthesis; (R)-pantothenate from (R)-pantoate and beta-alanine: step 1/1. In terms of biological role, catalyzes the condensation of pantoate with beta-alanine in an ATP-dependent reaction via a pantoyl-adenylate intermediate. This chain is Pantothenate synthetase, found in Alcanivorax borkumensis (strain ATCC 700651 / DSM 11573 / NCIMB 13689 / SK2).